Consider the following 341-residue polypeptide: Anthranilate phosphoribosyltransferase (341 aa).

5-phospho-alpha-D-ribose 1-diphosphate is bound by residues glycine 79, 82–83 (GD), threonine 87, 89–92 (NIST), 107–115 (KHGNRAASS), and serine 119. Glycine 79 serves as a coordination point for anthranilate. Serine 91 is a Mg(2+) binding site. Asparagine 110 lines the anthranilate pocket. An anthranilate-binding site is contributed by arginine 165. Aspartate 224 and glutamate 225 together coordinate Mg(2+).

Belongs to the anthranilate phosphoribosyltransferase family. In terms of assembly, homodimer. The cofactor is Mg(2+).

It carries out the reaction N-(5-phospho-beta-D-ribosyl)anthranilate + diphosphate = 5-phospho-alpha-D-ribose 1-diphosphate + anthranilate. It participates in amino-acid biosynthesis; L-tryptophan biosynthesis; L-tryptophan from chorismate: step 2/5. Its function is as follows. Catalyzes the transfer of the phosphoribosyl group of 5-phosphorylribose-1-pyrophosphate (PRPP) to anthranilate to yield N-(5'-phosphoribosyl)-anthranilate (PRA). The protein is Anthranilate phosphoribosyltransferase of Dehalococcoides mccartyi (strain ATCC BAA-2266 / KCTC 15142 / 195) (Dehalococcoides ethenogenes (strain 195)).